The chain runs to 203 residues: MKQNKKNLPIILASSSPARIELLNRIKIIPSQIIPADIDETPNLRELPAPLAIRLAYEKAIKVASQIEESAIIIAADTVAAVGRRILPKATTYEEVKNCIKMVSGRRHRVYTGLCIIKKENDQLTVRQKIVQTIVKFKKLSDEEINFYCSLDEGIDKAGGCKISGYAEAFISFISGSYSNVMGLPLFETVNALTSLGFKVYNR.

Asp-77 serves as the catalytic Proton acceptor.

It belongs to the Maf family. It depends on a divalent metal cation as a cofactor.

The protein resides in the cytoplasm. The enzyme catalyses a ribonucleoside 5'-triphosphate + H2O = a ribonucleoside 5'-phosphate + diphosphate + H(+). It carries out the reaction a 2'-deoxyribonucleoside 5'-triphosphate + H2O = a 2'-deoxyribonucleoside 5'-phosphate + diphosphate + H(+). Functionally, nucleoside triphosphate pyrophosphatase. May have a dual role in cell division arrest and in preventing the incorporation of modified nucleotides into cellular nucleic acids. The polypeptide is Nucleoside triphosphate pyrophosphatase (Rickettsia felis (strain ATCC VR-1525 / URRWXCal2) (Rickettsia azadi)).